Consider the following 268-residue polypeptide: Basic endochitinase CHB4 (268 aa).

Positions 1–24 (MALTKLSLVLFLCFLGLYSETVKS) are cleaved as a signal peptide. The Chitin-binding type-1 domain maps to 25-59 (QNCGCAPNLCCSQFGYCGSTDAYCGTGCRSGPCRS). Cystine bridges form between Cys27-Cys35, Cys29-Cys41, Cys34-Cys48, Cys52-Cys57, Cys92-Cys137, Cys150-Cys159, and Cys236-Cys268. The segment at 71-268 (SVGSIVTQAF…GVDPGPNLSC (198 aa)) is catalytic. The Proton donor role is filled by Glu132. Asn265 carries N-linked (GlcNAc...) asparagine glycosylation.

The protein belongs to the glycosyl hydrolase 19 family. Chitinase class I subfamily.

The protein resides in the secreted. The protein localises to the extracellular space. The enzyme catalyses Random endo-hydrolysis of N-acetyl-beta-D-glucosaminide (1-&gt;4)-beta-linkages in chitin and chitodextrins.. In terms of biological role, defense against chitin-containing fungal pathogens. The sequence is that of Basic endochitinase CHB4 from Brassica napus (Rape).